The chain runs to 120 residues: Putative pterin-4-alpha-carbinolamine dehydratase (120 aa).

Belongs to the pterin-4-alpha-carbinolamine dehydratase family.

The catalysed reaction is (4aS,6R)-4a-hydroxy-L-erythro-5,6,7,8-tetrahydrobiopterin = (6R)-L-erythro-6,7-dihydrobiopterin + H2O. The protein is Putative pterin-4-alpha-carbinolamine dehydratase of Saccharomyces cerevisiae (strain ATCC 204508 / S288c) (Baker's yeast).